Reading from the N-terminus, the 498-residue chain is Glycerol kinase 1 (498 aa).

An ADP-binding site is contributed by Thr12. ATP-binding residues include Thr12, Thr13, and Ser14. Thr12 provides a ligand contact to sn-glycerol 3-phosphate. Arg16 is a binding site for ADP. Arg82, Glu83, Tyr134, and Asp243 together coordinate sn-glycerol 3-phosphate. Residues Arg82, Glu83, Tyr134, Asp243, and Gln244 each coordinate glycerol. Residues Thr265 and Gly308 each contribute to the ADP site. ATP is bound by residues Thr265, Gly308, Gln312, and Gly409. Residues Gly409 and Asn413 each coordinate ADP.

The protein belongs to the FGGY kinase family. Homotetramer and homodimer (in equilibrium).

It catalyses the reaction glycerol + ATP = sn-glycerol 3-phosphate + ADP + H(+). It participates in polyol metabolism; glycerol degradation via glycerol kinase pathway; sn-glycerol 3-phosphate from glycerol: step 1/1. Its activity is regulated as follows. Activated by phosphorylation and inhibited by fructose 1,6-bisphosphate (FBP). Key enzyme in the regulation of glycerol uptake and metabolism. Catalyzes the phosphorylation of glycerol to yield sn-glycerol 3-phosphate. The polypeptide is Glycerol kinase 1 (Clostridium tetani (strain Massachusetts / E88)).